The following is a 1752-amino-acid chain: DNA-directed RNA polymerase II subunit rpb1 (1752 aa).

The Zn(2+) site is built by C69, C72, C79, H82, C109, C112, C150, and C175. Positions 487, 489, and 491 each coordinate Mg(2+). Residues 816–828 are bridging helix; that stretch reads PQEFFFHAMAGRE. A Glycyl lysine isopeptide (Lys-Gly) (interchain with G-Cter in ubiquitin) cross-link involves residue K1252. Phosphoserine occurs at positions 1489, 1499, 1506, and 1529. Y1531 is modified (phosphotyrosine). The disordered stretch occupies residues 1554–1752; that stretch reads TSPSYSPSSP…SPSYSPTSPS (199 aa). Repeat copies occupy residues 1558–1564, 1578–1584, 1585–1591, 1592–1598, and 1599–1605. Residues 1558-1752 are C-terminal domain (CTD); 26 X 7 AA approximate tandem repeats of Y-S-P-[TS]-S-P-S; sequence YSPSSPGYST…SPSYSPTSPS (195 aa). The 6; approximate repeat unit spans residues 1606–1612; it reads YSATSPS. 20 repeat units span residues 1613–1619, 1620–1626, 1627–1633, 1634–1640, 1641–1647, 1648–1654, 1655–1661, 1662–1668, 1669–1675, 1676–1682, 1683–1689, 1690–1696, 1697–1703, 1704–1710, 1711–1717, 1718–1724, 1725–1731, 1732–1738, 1739–1745, and 1746–1752.

It belongs to the RNA polymerase beta' chain family. In terms of assembly, component of the RNA polymerase II (Pol II) complex consisting of 12 subunits. In terms of processing, the tandem 7 residues repeats in the C-terminal domain (CTD) can be highly phosphorylated. The phosphorylation activates Pol II. Phosphorylation occurs mainly at residues 'Ser-2' and 'Ser-5' of the heptapeptide repeat. The phosphorylation state is believed to result from the balanced action of site-specific CTD kinases and phosphatase, and a 'CTD code' that specifies the position of Pol II within the transcription cycle has been proposed. Post-translationally, following transcription stress, the elongating form of RNA polymerase II (RNA pol IIo) is polyubiquitinated via 'Lys-63'-linkages on Lys-1252 at DNA damage sites without leading to degradation: ubiquitination promotes RNA pol IIo backtracking to allow access by the transcription-coupled nucleotide excision repair (TC-NER) machinery. Subsequent def1-dependent polyubiquitination by the elongin complex via 'Lys-48'-linkages may lead to proteasome-mediated degradation; presumably at stalled RNA pol II where TC-NER has failed, to halt global transcription and enable 'last resort' DNA repair pathways.

The protein resides in the nucleus. It catalyses the reaction RNA(n) + a ribonucleoside 5'-triphosphate = RNA(n+1) + diphosphate. In terms of biological role, DNA-dependent RNA polymerase catalyzes the transcription of DNA into RNA using the four ribonucleoside triphosphates as substrates. Largest and catalytic component of RNA polymerase II which synthesizes mRNA precursors and many functional non-coding RNAs. Forms the polymerase active center together with the second largest subunit. Pol II is the central component of the basal RNA polymerase II transcription machinery. It is composed of mobile elements that move relative to each other. RPB1 is part of the core element with the central large cleft, the clamp element that moves to open and close the cleft and the jaws that are thought to grab the incoming DNA template. At the start of transcription, a single-stranded DNA template strand of the promoter is positioned within the central active site cleft of Pol II. A bridging helix emanates from RPB1 and crosses the cleft near the catalytic site and is thought to promote translocation of Pol II by acting as a ratchet that moves the RNA-DNA hybrid through the active site by switching from straight to bent conformations at each step of nucleotide addition. During transcription elongation, Pol II moves on the template as the transcript elongates. Elongation is influenced by the phosphorylation status of the C-terminal domain (CTD) of Pol II largest subunit (RPB1), which serves as a platform for assembly of factors that regulate transcription initiation, elongation, termination and mRNA processing. In Schizosaccharomyces pombe (strain 972 / ATCC 24843) (Fission yeast), this protein is DNA-directed RNA polymerase II subunit rpb1 (rpb1).